A 126-amino-acid polypeptide reads, in one-letter code: Major sperm protein 2 (126 aa).

Ala2 is modified (N-acetylalanine). The 118-residue stretch at 8 to 125 (DIATMPNQKV…RRKNLPIEYN (118 aa)) folds into the MSP domain.

In terms of tissue distribution, sperm.

The protein localises to the cell projection. Its subcellular location is the pseudopodium. It is found in the cytoplasm. It localises to the cytoskeleton. Central component in molecular interactions underlying sperm crawling. Forms an extensive filament system that extends from sperm villipoda, along the leading edge of the pseudopod. The chain is Major sperm protein 2 (MSP-2) from Globodera rostochiensis (Golden nematode worm).